The following is a 122-amino-acid chain: Large ribosomal subunit protein uL14 (122 aa).

It belongs to the universal ribosomal protein uL14 family. In terms of assembly, part of the 50S ribosomal subunit. Forms a cluster with proteins L3 and L19. In the 70S ribosome, L14 and L19 interact and together make contacts with the 16S rRNA in bridges B5 and B8.

Functionally, binds to 23S rRNA. Forms part of two intersubunit bridges in the 70S ribosome. The chain is Large ribosomal subunit protein uL14 from Clavibacter michiganensis subsp. michiganensis (strain NCPPB 382).